Here is a 213-residue protein sequence, read N- to C-terminus: Glycerol-3-phosphate acyltransferase (213 aa).

6 helical membrane passes run 3–23 (IIIL…GLWI), 48–68 (ILGV…GTLA), 71–91 (LPLI…LAVI), 119–139 (PFFL…FSMI), 144–164 (VVAA…GFIL), and 165–185 (TSYD…IIFR).

Belongs to the PlsY family. In terms of assembly, probably interacts with PlsX.

Its subcellular location is the cell membrane. The enzyme catalyses an acyl phosphate + sn-glycerol 3-phosphate = a 1-acyl-sn-glycero-3-phosphate + phosphate. The protein operates within lipid metabolism; phospholipid metabolism. Functionally, catalyzes the transfer of an acyl group from acyl-phosphate (acyl-PO(4)) to glycerol-3-phosphate (G3P) to form lysophosphatidic acid (LPA). This enzyme utilizes acyl-phosphate as fatty acyl donor, but not acyl-CoA or acyl-ACP. The sequence is that of Glycerol-3-phosphate acyltransferase from Lactococcus lactis subsp. cremoris (strain MG1363).